A 110-amino-acid polypeptide reads, in one-letter code: Putative pterin-4-alpha-carbinolamine dehydratase (110 aa).

Belongs to the pterin-4-alpha-carbinolamine dehydratase family.

The catalysed reaction is (4aS,6R)-4a-hydroxy-L-erythro-5,6,7,8-tetrahydrobiopterin = (6R)-L-erythro-6,7-dihydrobiopterin + H2O. This chain is Putative pterin-4-alpha-carbinolamine dehydratase, found in Vibrio vulnificus (strain CMCP6).